Reading from the N-terminus, the 486-residue chain is Carboxypeptidase Y homolog ARB_07161 (486 aa).

The N-terminal stretch at 1 to 17 (MKGLLSLLLVGAANALA) is a signal peptide. Asn-111 carries an N-linked (GlcNAc...) asparagine glycan. The active site involves Ser-241. 3 cysteine pairs are disulfide-bonded: Cys-281–Cys-305, Cys-288–Cys-298, and Cys-327–Cys-334. Asp-403 is an active-site residue. Residue Cys-406 participates in substrate binding. N-linked (GlcNAc...) asparagine glycosylation occurs at Asn-430. The active site involves His-462.

It belongs to the peptidase S10 family.

The protein resides in the secreted. The enzyme catalyses Release of a C-terminal amino acid with broad specificity.. Its function is as follows. Involved in degradation of small peptides. This is Carboxypeptidase Y homolog ARB_07161 from Arthroderma benhamiae (strain ATCC MYA-4681 / CBS 112371) (Trichophyton mentagrophytes).